A 186-amino-acid chain; its full sequence is Tumor necrosis factor, alpha-induced protein 8-like protein 2 B (186 aa).

This sequence belongs to the TNFAIP8 family. TNFAIP8L2 subfamily.

Acts as a negative regulator of innate and adaptive immunity by maintaining immune homeostasis. Negative regulator of Toll-like receptor and T-cell receptor function. Prevents hyperresponsiveness of the immune system and maintains immune homeostasis. Inhibits jun/ap1 and NF-kappa-B activation. Promotes Fas-induced apoptosis. This Danio rerio (Zebrafish) protein is Tumor necrosis factor, alpha-induced protein 8-like protein 2 B (tnfaip8l2b).